The sequence spans 147 residues: Large ribosomal subunit protein uL13 (147 aa).

The protein belongs to the universal ribosomal protein uL13 family. As to quaternary structure, part of the 50S ribosomal subunit.

This protein is one of the early assembly proteins of the 50S ribosomal subunit, although it is not seen to bind rRNA by itself. It is important during the early stages of 50S assembly. This chain is Large ribosomal subunit protein uL13, found in Lactiplantibacillus plantarum (strain ATCC BAA-793 / NCIMB 8826 / WCFS1) (Lactobacillus plantarum).